The following is a 799-amino-acid chain: Disintegrin and metalloproteinase domain-containing protein B (799 aa).

An N-terminal signal peptide occupies residues 1–23 (MKAFSCLLSVIATAASLFQHVDA). The Extracellular segment spans residues 24–707 (RSHARDKLNN…VSDWVSRHKP (684 aa)). 5 N-linked (GlcNAc...) asparagine glycosylation sites follow: Asn33, Asn227, Asn228, Asn314, and Asn408. The Peptidase M12B domain maps to 272–511 (KVALIGVVAD…RTILTSCLTT (240 aa)). Intrachain disulfides connect Cys396-Cys496, Cys449-Cys460, and Cys581-Cys601. Zn(2+) is bound at residue His432. Glu433 is a catalytic residue. Zn(2+) contacts are provided by His436 and His442. One can recognise a Disintegrin domain in the interval 520 to 609 (GQQCGNGIVE…DCPHDIHSKD (90 aa)). Residues 708 to 728 (IVIGVAVGAGCLLLLAIASCI) traverse the membrane as a helical segment. The Cytoplasmic portion of the chain corresponds to 729–799 (CGRSRRQRPR…PGHLPSTRYA (71 aa)). The disordered stretch occupies residues 753–799 (VYNGWNGAPPNAQQSSPGGHPPYNNIPPPINAPPPAYPGHLPSTRYA). Pro residues predominate over residues 776 to 789 (NNIPPPINAPPPAY).

It depends on Zn(2+) as a cofactor.

Its subcellular location is the membrane. In terms of biological role, probable zinc protease. This is Disintegrin and metalloproteinase domain-containing protein B (ADM-B) from Arthroderma benhamiae (strain ATCC MYA-4681 / CBS 112371) (Trichophyton mentagrophytes).